Here is a 270-residue protein sequence, read N- to C-terminus: L-aspartate dehydrogenase (270 aa).

Residues Ala123 and Asn191 each coordinate NAD(+). Residue His221 is part of the active site.

The protein belongs to the L-aspartate dehydrogenase family.

The catalysed reaction is L-aspartate + NADP(+) + H2O = oxaloacetate + NH4(+) + NADPH + H(+). It catalyses the reaction L-aspartate + NAD(+) + H2O = oxaloacetate + NH4(+) + NADH + H(+). It functions in the pathway cofactor biosynthesis; NAD(+) biosynthesis; iminoaspartate from L-aspartate (dehydrogenase route): step 1/1. In terms of biological role, specifically catalyzes the NAD or NADP-dependent dehydrogenation of L-aspartate to iminoaspartate. This chain is L-aspartate dehydrogenase, found in Methanocella arvoryzae (strain DSM 22066 / NBRC 105507 / MRE50).